The chain runs to 465 residues: 3-isopropylmalate dehydratase large subunit (465 aa).

Residues Cys-346, Cys-406, and Cys-409 each coordinate [4Fe-4S] cluster.

This sequence belongs to the aconitase/IPM isomerase family. LeuC type 1 subfamily. Heterodimer of LeuC and LeuD. Requires [4Fe-4S] cluster as cofactor.

The catalysed reaction is (2R,3S)-3-isopropylmalate = (2S)-2-isopropylmalate. Its pathway is amino-acid biosynthesis; L-leucine biosynthesis; L-leucine from 3-methyl-2-oxobutanoate: step 2/4. Catalyzes the isomerization between 2-isopropylmalate and 3-isopropylmalate, via the formation of 2-isopropylmaleate. This Psychromonas ingrahamii (strain DSM 17664 / CCUG 51855 / 37) protein is 3-isopropylmalate dehydratase large subunit.